Consider the following 983-residue polypeptide: Inner tegument protein (983 aa).

Residues 474-983 form an interaction with large tegument protein region; it reads LNVNTHFAVQ…TSVSLPPASP (510 aa). The disordered stretch occupies residues 902–932; it reads PWESAPQPPRLRMTPDTDHEESTAGATSVPE. Residues 914–923 are compositionally biased toward basic and acidic residues; that stretch reads MTPDTDHEES.

Belongs to the herpesviridae inner tegument protein family. Interacts (via C-terminus) with the large tegument protein/LTP (via N-terminus).

The protein localises to the virion tegument. It is found in the host cytoplasm. Its subcellular location is the host nucleus. The protein resides in the host Golgi apparatus. It localises to the host trans-Golgi network. In terms of biological role, plays an essential role in cytoplasmic secondary envelopment during viral egress. Interacts with the capsid via the large tegument protein/LTP and participates in its transport to the host trans-Golgi network (TGN) where secondary envelopment occurs. Modulates tegumentation and capsid accumulation at the viral assembly complex. The chain is Inner tegument protein (UL47) from Homo sapiens (Human).